Reading from the N-terminus, the 162-residue chain is Ribose-5-phosphate isomerase B (162 aa).

D-ribulose 5-phosphate-binding positions include 11 to 12 (DH) and 70 to 74 (GSGNG). The active-site Proton acceptor is the Glu75. His102 (proton donor) is an active-site residue. The D-ribulose 5-phosphate site is built by Asn103, Arg113, Arg137, and Arg141.

The protein belongs to the LacAB/RpiB family. In terms of assembly, homodimer.

It catalyses the reaction aldehydo-D-ribose 5-phosphate = D-ribulose 5-phosphate. The protein operates within carbohydrate degradation; pentose phosphate pathway; D-ribose 5-phosphate from D-ribulose 5-phosphate (non-oxidative stage): step 1/1. Catalyzes the interconversion of ribulose-5-P and ribose-5-P. This is Ribose-5-phosphate isomerase B from Mycobacterium leprae (strain TN).